The sequence spans 130 residues: Small ribosomal subunit protein uS9 (130 aa).

Belongs to the universal ribosomal protein uS9 family.

This Haemophilus influenzae (strain 86-028NP) protein is Small ribosomal subunit protein uS9.